The sequence spans 147 residues: Peroxynitrite isomerase (147 aa).

H137 serves as a coordination point for heme b.

The protein belongs to the nitrobindin family. In terms of assembly, homodimer. Requires heme b as cofactor.

The catalysed reaction is peroxynitrite = nitrate. It functions in the pathway nitrogen metabolism. In terms of biological role, heme-binding protein able to scavenge peroxynitrite and to protect free L-tyrosine against peroxynitrite-mediated nitration, by acting as a peroxynitrite isomerase that converts peroxynitrite to nitrate. Therefore, this protein likely plays a role in peroxynitrite sensing and in the detoxification of reactive nitrogen and oxygen species (RNS and ROS, respectively). Is able to bind nitric oxide (NO) in vitro, but may act as a sensor of peroxynitrite levels in vivo. The chain is Peroxynitrite isomerase from Frankia alni (strain DSM 45986 / CECT 9034 / ACN14a).